Consider the following 439-residue polypeptide: Cell division protein FtsA (439 aa).

Belongs to the FtsA/MreB family. In terms of assembly, self-interacts. Interacts with FtsZ.

It is found in the cell inner membrane. Cell division protein that is involved in the assembly of the Z ring. May serve as a membrane anchor for the Z ring. The protein is Cell division protein FtsA of Shigella flexneri.